The primary structure comprises 87 residues: MKPNIHPEYRTVVFHDTSVDEYFKIGSTIKTDREIELDGVTYPYVTIDVSSKSHPFYTGKLRTVASEGNVARFTQRFGRFVSTKKGS.

The protein belongs to the bacterial ribosomal protein bL31 family. Type B subfamily. In terms of assembly, part of the 50S ribosomal subunit.

The chain is Large ribosomal subunit protein bL31B from Escherichia coli O8 (strain IAI1).